The primary structure comprises 405 residues: Argininosuccinate synthase (405 aa).

ATP is bound by residues 10 to 18 and alanine 37; that span reads AYSGGLDTS. Positions 88 and 93 each coordinate L-citrulline. Glycine 118 contributes to the ATP binding site. Positions 120, 124, and 125 each coordinate L-aspartate. Asparagine 124 serves as a coordination point for L-citrulline. The L-citrulline site is built by arginine 128, serine 179, serine 188, glutamate 264, and tyrosine 276.

The protein belongs to the argininosuccinate synthase family. Type 1 subfamily. Homotetramer.

It is found in the cytoplasm. It carries out the reaction L-citrulline + L-aspartate + ATP = 2-(N(omega)-L-arginino)succinate + AMP + diphosphate + H(+). The protein operates within amino-acid biosynthesis; L-arginine biosynthesis; L-arginine from L-ornithine and carbamoyl phosphate: step 2/3. The sequence is that of Argininosuccinate synthase from Nitrosococcus oceani (strain ATCC 19707 / BCRC 17464 / JCM 30415 / NCIMB 11848 / C-107).